A 467-amino-acid chain; its full sequence is Light-independent protochlorophyllide reductase subunit N (467 aa).

Residues C23, C48, and C108 each coordinate [4Fe-4S] cluster.

The protein belongs to the BchN/ChlN family. Protochlorophyllide reductase is composed of three subunits; ChlL, ChlN and ChlB. Forms a heterotetramer of two ChlB and two ChlN subunits. Requires [4Fe-4S] cluster as cofactor.

It catalyses the reaction chlorophyllide a + oxidized 2[4Fe-4S]-[ferredoxin] + 2 ADP + 2 phosphate = protochlorophyllide a + reduced 2[4Fe-4S]-[ferredoxin] + 2 ATP + 2 H2O. The protein operates within porphyrin-containing compound metabolism; chlorophyll biosynthesis (light-independent). Component of the dark-operative protochlorophyllide reductase (DPOR) that uses Mg-ATP and reduced ferredoxin to reduce ring D of protochlorophyllide (Pchlide) to form chlorophyllide a (Chlide). This reaction is light-independent. The NB-protein (ChlN-ChlB) is the catalytic component of the complex. In Trichormus variabilis (strain ATCC 29413 / PCC 7937) (Anabaena variabilis), this protein is Light-independent protochlorophyllide reductase subunit N.